Consider the following 296-residue polypeptide: NADH-cytochrome b5 reductase 2 (296 aa).

A helical membrane pass occupies residues 12–29; that stretch reads LPIALGVGAASIATAIIL. Positions 47 to 151 constitute an FAD-binding FR-type domain; sequence NEWIDLPIIK…KGPITKWEWK (105 aa). 154 to 189 provides a ligand contact to FAD; it reads SYDSITLLGAGTGINPLYQLVHHIAENPEDNTKIHL.

Belongs to the flavoprotein pyridine nucleotide cytochrome reductase family. FAD serves as cofactor.

The protein resides in the mitochondrion outer membrane. The catalysed reaction is 2 Fe(III)-[cytochrome b5] + NADH = 2 Fe(II)-[cytochrome b5] + NAD(+) + H(+). Functionally, may mediate the reduction of outer membrane cytochrome b5. The sequence is that of NADH-cytochrome b5 reductase 2 (MCR1) from Kluyveromyces lactis (strain ATCC 8585 / CBS 2359 / DSM 70799 / NBRC 1267 / NRRL Y-1140 / WM37) (Yeast).